A 53-amino-acid polypeptide reads, in one-letter code: MHILTRSSKNAFPRSRSRQDIHISSHIHRDTSNSALLKILVITRTRLDSFVKT.

Residues 1–10 (MHILTRSSKN) show a composition bias toward polar residues. The disordered stretch occupies residues 1 to 25 (MHILTRSSKNAFPRSRSRQDIHISS).

This is an uncharacterized protein from Saccharomyces cerevisiae (strain ATCC 204508 / S288c) (Baker's yeast).